Here is a 456-residue protein sequence, read N- to C-terminus: Bifunctional protein GlmU (456 aa).

Residues 1–229 are pyrophosphorylase; that stretch reads MLNNAMSVVI…LSEVEGVNNR (229 aa). UDP-N-acetyl-alpha-D-glucosamine contacts are provided by residues 11-14, Lys-25, Gln-76, 81-82, 103-105, Gly-140, Glu-154, Asn-169, and Asn-227; these read LAAG, GT, and YGD. Mg(2+) is bound at residue Asp-105. Asn-227 provides a ligand contact to Mg(2+). The interval 230–250 is linker; that stretch reads LQLSRLERVYQSEQAEKLLLA. An N-acetyltransferase region spans residues 251 to 456; it reads GVMLRDPARF…EGWRRPVKKK (206 aa). Positions 333 and 351 each coordinate UDP-N-acetyl-alpha-D-glucosamine. The Proton acceptor role is filled by His-363. UDP-N-acetyl-alpha-D-glucosamine-binding residues include Tyr-366 and Asn-377. Acetyl-CoA-binding positions include Ala-380, 386–387, Ser-405, Ala-423, and Arg-440; that span reads NY.

The protein in the N-terminal section; belongs to the N-acetylglucosamine-1-phosphate uridyltransferase family. It in the C-terminal section; belongs to the transferase hexapeptide repeat family. In terms of assembly, homotrimer. Requires Mg(2+) as cofactor.

Its subcellular location is the cytoplasm. It catalyses the reaction alpha-D-glucosamine 1-phosphate + acetyl-CoA = N-acetyl-alpha-D-glucosamine 1-phosphate + CoA + H(+). The catalysed reaction is N-acetyl-alpha-D-glucosamine 1-phosphate + UTP + H(+) = UDP-N-acetyl-alpha-D-glucosamine + diphosphate. It participates in nucleotide-sugar biosynthesis; UDP-N-acetyl-alpha-D-glucosamine biosynthesis; N-acetyl-alpha-D-glucosamine 1-phosphate from alpha-D-glucosamine 6-phosphate (route II): step 2/2. Its pathway is nucleotide-sugar biosynthesis; UDP-N-acetyl-alpha-D-glucosamine biosynthesis; UDP-N-acetyl-alpha-D-glucosamine from N-acetyl-alpha-D-glucosamine 1-phosphate: step 1/1. The protein operates within bacterial outer membrane biogenesis; LPS lipid A biosynthesis. In terms of biological role, catalyzes the last two sequential reactions in the de novo biosynthetic pathway for UDP-N-acetylglucosamine (UDP-GlcNAc). The C-terminal domain catalyzes the transfer of acetyl group from acetyl coenzyme A to glucosamine-1-phosphate (GlcN-1-P) to produce N-acetylglucosamine-1-phosphate (GlcNAc-1-P), which is converted into UDP-GlcNAc by the transfer of uridine 5-monophosphate (from uridine 5-triphosphate), a reaction catalyzed by the N-terminal domain. This chain is Bifunctional protein GlmU, found in Shigella boydii serotype 4 (strain Sb227).